The following is a 137-amino-acid chain: Large-conductance mechanosensitive channel (137 aa).

2 consecutive transmembrane segments (helical) span residues 10-30 (FAMR…AAFG) and 76-96 (GVFI…FMAI).

Belongs to the MscL family. Homopentamer.

It localises to the cell inner membrane. Its function is as follows. Channel that opens in response to stretch forces in the membrane lipid bilayer. May participate in the regulation of osmotic pressure changes within the cell. This chain is Large-conductance mechanosensitive channel, found in Escherichia coli O45:K1 (strain S88 / ExPEC).